We begin with the raw amino-acid sequence, 1113 residues long: Potassium channel subfamily U member 1 (1113 aa).

Topologically, residues 1-24 (MSQTLLDNLNKKELTETSCTIEIQ) are extracellular. The chain crosses the membrane as a helical span at residues 25-45 (AAFILSSLATFFGGLIVLFIF). The Cytoplasmic portion of the chain corresponds to 46-101 (RIALKISRNWKTVKGPRGILELFSSRRIEVNPLRKLYFHGVFRERIEMLLSAQTIV). A helical transmembrane segment spans residues 102-122 (GQVLVILVFVLSIGSLVIYFI). The Extracellular segment spans residues 123–137 (NSMDPVRKCSSYEDK). Residues 138–158 (IVHVDLSFNAFFSFYFGLRFW) traverse the membrane as a helical segment. At 159 to 165 (AAEDKIK) the chain is on the cytoplasmic side. A helical membrane pass occupies residues 166 to 186 (FWLEMNSIVDIFTIPPTFISY). Residues 187-188 (YL) are Extracellular-facing. A helical; Voltage-sensor membrane pass occupies residues 189–209 (KSNWLGLRFLRALRLLELPKI). The Cytoplasmic portion of the chain corresponds to 210–226 (LQILQVIKTSNSVKLSK). A helical transmembrane segment spans residues 227–247 (LMSIVISTWFTAAGFLHLVEN). The Extracellular portion of the chain corresponds to 248 to 259 (SGDPWLNGRNSQ). An intramembrane region (pore-forming) is located at residues 260-282 (TMSYFESIYLVTATMSTVGFGDV). The Extracellular segment spans residues 283-290 (VAKTSLGR). Residues 291-311 (IFIVFFTLGSLILFANYIPEM) traverse the membrane as a helical segment. At 312 to 1113 (VELFSTRKKY…FDASDIDPGK (802 aa)) the chain is on the cytoplasmic side. RCK N-terminal domains lie at 331-473 (KKFI…DNII) and 710-881 (QNHI…DEAI). A compositionally biased stretch (polar residues) spans 1047-1081 (ASIQDQDTTTNVTSMSQGSNFQGAQSALNEHSLSP). A disordered region spans residues 1047–1091 (ASIQDQDTTTNVTSMSQGSNFQGAQSALNEHSLSPASAMGEKKSP).

Belongs to the potassium channel family. Calcium-activated (TC 1.A.1.3) subfamily. KCa1.1/KCNMA1 sub-subfamily. In terms of assembly, homotetramer; which constitutes the activated potassium channel. Interacts with LRRC52; this interaction changes channel gating properties, such as shifting gating to more negative potentials at a given pH.

Its subcellular location is the cell membrane. The protein resides in the cell projection. The protein localises to the cilium. It localises to the flagellum membrane. The catalysed reaction is K(+)(in) = K(+)(out). Its activity is regulated as follows. Regulated by changes in cytosolic pH; activated by alkalization. Not activated by intracellular Ca(2+). VU0546110 acts as a selective inhibitor. The auxiliary subunit LRRC52 shifts the activation of KCNU1 to more negative potentials at a given pH. Functionally, testis-specific potassium channel activated by both intracellular pH and membrane voltage that mediates export of K(+). Represents the primary spermatozoan K(+) current. The channel underlies a pH-triggered membrane hyperpolarization during the process of sperm capacitation, as sperm encounter the alkaline environment near the ovum in the female reproductive tract, thereby playing an essential for male fertility. The chain is Potassium channel subfamily U member 1 (Kcnu1) from Rattus norvegicus (Rat).